The following is a 496-amino-acid chain: Probable cytosol aminopeptidase (496 aa).

Mn(2+) contacts are provided by K258 and D263. K270 is an active-site residue. Residues D281, D340, and E342 each coordinate Mn(2+). Residue R344 is part of the active site.

It belongs to the peptidase M17 family. It depends on Mn(2+) as a cofactor.

The protein localises to the cytoplasm. It carries out the reaction Release of an N-terminal amino acid, Xaa-|-Yaa-, in which Xaa is preferably Leu, but may be other amino acids including Pro although not Arg or Lys, and Yaa may be Pro. Amino acid amides and methyl esters are also readily hydrolyzed, but rates on arylamides are exceedingly low.. It catalyses the reaction Release of an N-terminal amino acid, preferentially leucine, but not glutamic or aspartic acids.. Functionally, presumably involved in the processing and regular turnover of intracellular proteins. Catalyzes the removal of unsubstituted N-terminal amino acids from various peptides. The sequence is that of Probable cytosol aminopeptidase from Helicobacter pylori (strain G27).